Here is a 235-residue protein sequence, read N- to C-terminus: Ribosomal RNA small subunit methyltransferase G (235 aa).

S-adenosyl-L-methionine-binding positions include Gly-74, Leu-79, 124–125, and Arg-142; that span reads AE. Positions 211–235 are disordered; it reads RRRAAKPGRNKSGRTARSRGRTGRR. Positions 213–235 are enriched in basic residues; sequence RAAKPGRNKSGRTARSRGRTGRR.

The protein belongs to the methyltransferase superfamily. RNA methyltransferase RsmG family.

The protein localises to the cytoplasm. Specifically methylates the N7 position of guanine in position 518 of 16S rRNA. This is Ribosomal RNA small subunit methyltransferase G from Mycolicibacterium smegmatis (strain ATCC 700084 / mc(2)155) (Mycobacterium smegmatis).